The sequence spans 401 residues: E3 ubiquitin-protein ligase DA2 (401 aa).

The RING-type; degenerate zinc finger occupies cysteine 59–lysine 102. The span at lysine 139 to glutamate 153 shows a compositional bias: basic and acidic residues. Residues lysine 139–glycine 164 form a disordered region.

In terms of assembly, interacts with DA1 (via C-terminus).

It carries out the reaction S-ubiquitinyl-[E2 ubiquitin-conjugating enzyme]-L-cysteine + [acceptor protein]-L-lysine = [E2 ubiquitin-conjugating enzyme]-L-cysteine + N(6)-ubiquitinyl-[acceptor protein]-L-lysine.. Its pathway is protein modification; protein ubiquitination. Its function is as follows. E3 ubiquitin-protein ligase involved in the regulation of organ and seed size. Acts synergistically with DA1 to regulate seed size. Functions synergistically with DA1 to restrict cell proliferation in the maternal integuments of ovules and developing seeds. Seems to function independently of BB. Possesses E3 ubiquitin-protein ligase activity in vitro. Polyubiquitinates DA1, DAR1 and DAR2, but not DAR3. This chain is E3 ubiquitin-protein ligase DA2, found in Arabidopsis thaliana (Mouse-ear cress).